We begin with the raw amino-acid sequence, 449 residues long: Cytochrome P450 monooxygenase iliC (449 aa).

Residues 28 to 44 (TFAITFMGVKQICTIEG) form a helical membrane-spanning segment. Cys397 contributes to the heme binding site.

It belongs to the cytochrome P450 family. Heme serves as cofactor.

The protein localises to the membrane. The catalysed reaction is (3E,5S)-3-[(2E,4E,8S,10E,12Z)-1-hydroxy-4,8-dimethyltetradeca-2,4,10,12-tetraen-1-ylidene]-5-[(4-hydroxyphenyl)methyl]pyrrolidine-2,4-dione + reduced [NADPH--hemoprotein reductase] + O2 = 3-[(2E,4E,8S,10E,12Z)-4,8-dimethyltetradeca-2,4,10,12-tetraenoyl]-4-hydroxy-5-(4-hydroxyphenyl)-1,2-dihydropyridin-2-one + oxidized [NADPH--hemoprotein reductase] + 2 H2O. It functions in the pathway mycotoxin biosynthesis. Functionally, cytochrome P450 monooxygenase; part of the gene cluster that mediates the biosynthesis of ilicicolin H, a 4-hydroxy-2-pyridonealkaloid that has potent and broad antifungal activities by inhibiting the mitochondrial respiration chain. IliC catalyzes the ring expansion of the tetramate intermediate to the acyclic 2-pyridone intermediate that contains the trans bis-diene chain. The biosynthesis of ilicicolin H starts with formation of the tetramic acid by the hybrid PKS-NRPS synthetase iliA with the partnering trans-enoyl reductase iliB since iliA lacks a designated enoylreductase (ER) domain. The cytochrome P450 monooxygenase iliC then catalyzes the ring expansion of the tetramate to the acyclic 2-pyridone. The pericyclase iliD further converts the acyclic 2-pyridone into 8-epi-ilicicolin H. 8-epi-ilicicolin H might then spontaneously convert to ilicicolin H since ilicicolin H is produced in the absence of the epimerase iliE, in contrast to what was observed for the Talaromyces variabilis ilicolin H biosynthetic pathway. The polypeptide is Cytochrome P450 monooxygenase iliC (Hypocrea jecorina (strain QM6a) (Trichoderma reesei)).